The following is a 210-amino-acid chain: Thymidylate kinase (210 aa).

9-16 (GLEGAGKS) serves as a coordination point for ATP.

It belongs to the thymidylate kinase family.

The catalysed reaction is dTMP + ATP = dTDP + ADP. Functionally, phosphorylation of dTMP to form dTDP in both de novo and salvage pathways of dTTP synthesis. The sequence is that of Thymidylate kinase from Aliivibrio salmonicida (strain LFI1238) (Vibrio salmonicida (strain LFI1238)).